The chain runs to 58 residues: UPF0391 membrane protein Sbal_1421 (58 aa).

A run of 2 helical transmembrane segments spans residues 6–26 and 28–48; these read LVFLVVAVIAGLLGFTGIAGA and AGIAKIIFLIFIVLLVISLLV.

Belongs to the UPF0391 family.

It localises to the cell membrane. The chain is UPF0391 membrane protein Sbal_1421 from Shewanella baltica (strain OS155 / ATCC BAA-1091).